An 873-amino-acid polypeptide reads, in one-letter code: Zinc fingers and homeoboxes protein 1 (873 aa).

The disordered stretch occupies residues 1-63 (MASRRKSTTP…ESVDSDNQQN (63 aa)). Residues 18–30 (QDPDLELISDLDE) are compositionally biased toward acidic residues. Phosphothreonine is present on Thr-36. Residues Ser-45, Ser-47, and Ser-48 each carry the phosphoserine modification. 2 C2H2-type zinc fingers span residues 70–93 (YECK…DSEH) and 102–125 (YVCV…LKYH). A Glycyl lysine isopeptide (Lys-Gly) (interchain with G-Cter in SUMO2) cross-link involves residue Lys-159. A Phosphoserine modification is found at Ser-202. Residues 202–236 (SVEDVPEEKENEIKPDREEIVENPSSSASESNTST) form a disordered region. Over residues 212-221 (NEIKPDREEI) the composition is skewed to basic and acidic residues. Low complexity predominate over residues 223–236 (ENPSSSASESNTST). Residues 272–432 (NSNLIPKVLI…QNNVQKSQVP (161 aa)) form a required for dimerization region. The interval 272-564 (NSNLIPKVLI…AQPKQSWNPF (293 aa)) is required for interaction with NFYA. Residues 284-346 (NSIPTYNAAL…LKHGVSWTPE (63 aa)) constitute a DNA-binding region (homeobox 1). Residues Lys-441, Lys-454, Lys-485, and Lys-629 each participate in a glycyl lysine isopeptide (Lys-Gly) (interchain with G-Cter in SUMO2) cross-link. 2 consecutive DNA-binding regions (homeobox) follow at residues 464–526 (SFGI…KSNQ) and 569–630 (PQKF…EEKM). Disordered regions lie at residues 626–667 (KEEK…ICKK) and 732–769 (SSMN…INNW). Ser-648 is subject to Phosphoserine. Residues 660 to 722 (STGKICKKTP…YAWKNGNLKW (63 aa)) constitute a DNA-binding region (homeobox 4). A required for nuclear localization region spans residues 734–768 (MNGLSSLRKRGRGRPKGRGRGRPRGRPRGSKRINN). A compositionally biased stretch (basic residues) spans 740-764 (LRKRGRGRPKGRGRGRPRGRPRGSK). Ser-774 carries the phosphoserine modification. The segment at residues 777–832 (KFKTGTAILKDYYLKHKFLNEQDLDELVNKSHMGYEQVREWFAERQRRSELGIELF) is a DNA-binding region (homeobox 5). Residues 829-873 (IELFEENEEEDEVIDDQEEDEEETDDSDTWEPPRHVKRKLSKSDD) form a disordered region. Acidic residues predominate over residues 831–857 (LFEENEEEDEVIDDQEEDEEETDDSDT). A required for repressor activity region spans residues 831-873 (LFEENEEEDEVIDDQEEDEEETDDSDTWEPPRHVKRKLSKSDD). Over residues 863–873 (HVKRKLSKSDD) the composition is skewed to basic residues.

This sequence belongs to the ZHX family. Forms homodimers. Also forms heterodimers with ZHX3 which is a prerequisite for repressor activity and with ZHX2. Interacts with NFYA. Interacts with ATF7IP.

It localises to the nucleus. In terms of biological role, acts as a transcriptional repressor. This Gorilla gorilla gorilla (Western lowland gorilla) protein is Zinc fingers and homeoboxes protein 1 (ZHX1).